The chain runs to 199 residues: COMM domain-containing protein 2 (199 aa).

The COMM domain maps to 123–190 (SYHNLEWRLD…QALEEMKTNH (68 aa)).

The protein belongs to the COMM domain-containing protein 2 family. As to quaternary structure, component of the commander complex consisting of the CCC subcomplex and the retriever subcomplex. Component of the CCC (COMMD/CCDC22/CCDC93) subcomplex consisting of COMMD1, COMMD2, COMMD3, COMMD4, COMMD5, COMMD6, COMMD7, COMMD8, COMMD9, COMMD10, CCDC22 and CCDC93; within the complex forms a heterodimer with COMMD3. Interacts with RELA, RELB, NFKB1/p105, NFKB2/p100. Interacts with CCDC22, CCDC93, SCNN1B, CUL3, CUL4B, CUL5, CUL7. In terms of tissue distribution, ubiquitous.

The protein localises to the cytoplasm. In terms of biological role, scaffold protein in the commander complex that is essential for endosomal recycling of transmembrane cargos; the commander complex is composed of the CCC subcomplex and the retriever subcomplex. May modulate activity of cullin-RING E3 ubiquitin ligase (CRL) complexes. May down-regulate activation of NF-kappa-B. In Homo sapiens (Human), this protein is COMM domain-containing protein 2 (COMMD2).